Reading from the N-terminus, the 479-residue chain is 3-isopropylmalate dehydratase large subunit (479 aa).

3 residues coordinate [4Fe-4S] cluster: C350, C415, and C418.

It belongs to the aconitase/IPM isomerase family. LeuC type 1 subfamily. As to quaternary structure, heterodimer of LeuC and LeuD. [4Fe-4S] cluster serves as cofactor.

The enzyme catalyses (2R,3S)-3-isopropylmalate = (2S)-2-isopropylmalate. The protein operates within amino-acid biosynthesis; L-leucine biosynthesis; L-leucine from 3-methyl-2-oxobutanoate: step 2/4. Functionally, catalyzes the isomerization between 2-isopropylmalate and 3-isopropylmalate, via the formation of 2-isopropylmaleate. The protein is 3-isopropylmalate dehydratase large subunit of Caulobacter vibrioides (strain ATCC 19089 / CIP 103742 / CB 15) (Caulobacter crescentus).